Here is a 715-residue protein sequence, read N- to C-terminus: MTTTSAFMLNVRLDNVAVVAIDVPGEKVNTLKAEFAAQVRAILKQIRENKALQGVVFISAKADNFIAGADINMIGHCQNAQEAETLARQGQQLMAEIQALPVPVIAAIHGACLGGGLEMALACHRRICTDDVKTVLGLPEVQLGLLPGSGGTQRLPRLVGVSTALDMILTGKQLRARQALKAGLVDDVVPQTILLEAAVELAKKERLAQRTLPVRERILAGPLGRALLFRLVRKKTAQKTQGNYPATERIIDVIETGLAQGSSSGYDAEARAFGELAMTPQSQALRAVFFASTEVKKDPGSDAPPGPLNSVGILGGGLMGGGIAWVTACKGGLPVRIKDINTQGINHALKYSWDLLETKVRRRHIKANERDKQLALISGSTDYRGFSHRDLVIEAVFEDLPLKQQMVAEVEQNCAAHTIFASNTSSLPIGDIAANAARPEQVIGLHFFSPVEKMPLVEVIPHASTSAQTIATTVKLAKKQGKTPIVVSDKAGFYVNRILVPYINEAIRMLTEGERVEHIDAALVKFGFPVGPIQLLDEVGIDTGTKIIPVLEAAYGERFSAPANVVASILNDDRKGRKNGRGFYLYGEKGRKSKKQVDPAIYKLIGVQGQSRLSAQQVAERCVMLMLNEAARCFDEKVIRSARDGDIGAVFGIGFPPFLGGPFRYMDALGPGEMVATLQRLAALYGPRYAPCEQLVRMAERREHFWTNGETDQGN.

The tract at residues 1–190 (MTTTSAFMLN…KAGLVDDVVP (190 aa)) is enoyl-CoA hydratase. A 3-hydroxyacyl-CoA dehydrogenase region spans residues 306-715 (GPLNSVGILG…WTNGETDQGN (410 aa)).

The protein in the N-terminal section; belongs to the enoyl-CoA hydratase/isomerase family. It in the central section; belongs to the 3-hydroxyacyl-CoA dehydrogenase family. Heterotetramer of two alpha chains (FadJ) and two beta chains (FadI).

It localises to the cytoplasm. It carries out the reaction a (3S)-3-hydroxyacyl-CoA = a (2E)-enoyl-CoA + H2O. The enzyme catalyses a 4-saturated-(3S)-3-hydroxyacyl-CoA = a (3E)-enoyl-CoA + H2O. It catalyses the reaction a (3S)-3-hydroxyacyl-CoA + NAD(+) = a 3-oxoacyl-CoA + NADH + H(+). The catalysed reaction is (3S)-3-hydroxybutanoyl-CoA = (3R)-3-hydroxybutanoyl-CoA. Its pathway is lipid metabolism; fatty acid beta-oxidation. In terms of biological role, catalyzes the formation of a hydroxyacyl-CoA by addition of water on enoyl-CoA. Also exhibits 3-hydroxyacyl-CoA epimerase and 3-hydroxyacyl-CoA dehydrogenase activities. This is Fatty acid oxidation complex subunit alpha from Salmonella dublin (strain CT_02021853).